Consider the following 531-residue polypeptide: MSSLRLEENRKLATAAAVCPLSNCQFSGVVISAIADEQKLEFANKYRGSCTLLCSYDSQGVVLRIVADDDRSHVLKEYMISADTDAAQMGRRSYAVSLESDNLVLRFASEQDQQLFRKVVENVKHLRPKSVFSQRTEESSASQYFQFYGYLSQQQNMMQDYVRTSTYQRAILGNSIDFQDKIVLDVGAGSGILSFFAVQAGAAKVYAIEASNMAQYAQQLVESNNVQHKISVIPGKIEEIELPEKVDVIISEPMGYMLYNERMLETYLHARKWLKPQGKMFPTHGDLHIAPFSDESLYSEQYNKANFWYQSAFHGVDLTTLHKEGMKEYFRQPIVDTFDIRICMAKSVRHVCDFLNDKEDDLHVIDIPLEFHILQTGICHGLAFWFDVEFSGTTQNVWLSTSPTAPLTHWYQVRCLLPMPIFIKQGQTLTGRVLLEANRRQSYDVTIDLHIEGTLISSSNTLDLKNPYFRYTGAPVQAPPGTSTQSPSEQYWTQVDSQGSRNSSSMLNGTISVNGMGDGSMDITHGLMHPH.

One can recognise an SAM-dependent MTase PRMT-type domain in the interval Ala-141 to His-450. S-adenosyl-L-methionine-binding residues include Gln-154, Arg-163, Gly-187, Glu-209, Glu-238, and Thr-266. Asymmetric dimethylarginine; by autocatalysis is present on Arg-501.

It belongs to the class I-like SAM-binding methyltransferase superfamily. Protein arginine N-methyltransferase family. Homodimer. Post-translationally, the dimethylated protein is the major form.

The protein resides in the cytoplasm. It localises to the nucleus. It carries out the reaction L-arginyl-[protein] + 2 S-adenosyl-L-methionine = N(omega),N(omega)-dimethyl-L-arginyl-[protein] + 2 S-adenosyl-L-homocysteine + 2 H(+). Its function is as follows. Methylates (mono- and asymmetric dimethylation) the guanidino nitrogens of arginyl residues in proteins. May methylate histone H3 at 'Arg-17' and activate transcription via chromatin remodeling. The protein is Histone-arginine methyltransferase CARMER (Art4) of Drosophila ananassae (Fruit fly).